The following is a 726-amino-acid chain: Cyclin-T1 (726 aa).

A Phosphoserine modification is found at serine 117. A Nuclear localization signal, and interaction with Tat-TAR RNA motif is present at residues 253 to 270; it reads KRIWNWRACEAAKKTKAD. Position 340 is a phosphoserine (serine 340). Residue lysine 342 forms a Glycyl lysine isopeptide (Lys-Gly) (interchain with G-Cter in SUMO2) linkage. Residues 360–385 are disordered; it reads VDHSLPQDGSNAFISQKQNSKSVPSA. Residues 366–382 are compositionally biased toward polar residues; that stretch reads QDGSNAFISQKQNSKSV. Residues 384-425 adopt a coiled-coil conformation; sequence SAKVSLKEYRAKHAEELAAQKRQLENMEANVKSQYAYAAQNL. Phosphoserine is present on serine 388. At lysine 390 the chain carries N6-acetyllysine. Residue lysine 415 forms a Glycyl lysine isopeptide (Lys-Gly) (interchain with G-Cter in SUMO2) linkage. An ADP-ribosylserine mark is found at serine 416, serine 474, and serine 475. The tract at residues 480–550 is histidine-rich domain (HRD); it reads IKMRIKVHAA…RPGDPKHSSQ (71 aa). A Glycyl lysine isopeptide (Lys-Gly) (interchain with G-Cter in SUMO2) cross-link involves residue lysine 481. Lysine 485 is subject to N6-(ADP-ribosyl)lysine. An ADP-ribosylhistidine modification is found at histidine 487. Residues 487 to 506 are compositionally biased toward basic and acidic residues; it reads HAAADKHNSVEDSVTKSREH. Disordered regions lie at residues 487–650 and 688–726; these read HAAA…NGHN and SDYLNPRSGGISSRSGNTDKPRPPPLPSEPPPPLPPLPK. Phosphoserine is present on residues serine 495 and serine 499. Residues 507 to 530 show a composition bias toward basic residues; that stretch reads KEKHKTHPSNHHHHHNHHSHKHSH. A required for interaction with ZMYND8 region spans residues 527 to 570; it reads KHSHSQLPVGTGNKRPGDPKHSSQTSNLAHKTYSLSSSFSSSSS. At histidine 530 the chain carries ADP-ribosylhistidine. 3 positions are modified to ADP-ribosylserine: serine 531, serine 549, and serine 552. Histidine 556 is modified (ADP-ribosylhistidine). Positions 560–570 are enriched in low complexity; sequence SLSSSFSSSSS. Serine 563 is modified (ADP-ribosylserine). 2 positions are modified to phosphoserine: serine 564 and serine 577. Residues 594-609 are compositionally biased toward low complexity; the sequence is STKSSSLNFSFPSLPT. Residues 615-630 show a composition bias toward polar residues; that stretch reads GHSSDTSGLSFSQPSC. Serine 637 carries the post-translational modification ADP-ribosylserine. Pro residues predominate over residues 710 to 726; that stretch reads PPPLPSEPPPPLPPLPK.

The protein belongs to the cyclin family. Cyclin C subfamily. As to quaternary structure, cyclin-T1 is the predominant cyclin that associates with CDK9 to form a heterodimer called P-TEFb. P-TEFb forms a complex with AFF4/AF5Q31. Component of a complex which is at least composed of HTATSF1/Tat-SF1, P-TEFb complex, RNA pol II, SUPT5H, and NCL/nucleolin. Component of the 7SK snRNP complex at least composed of P-TEFb (composed of CDK9 and CCNT1/cyclin-T1), HEXIM1, HEXIM2, BCDIN3, SART3 proteins and 7SK and U6 snRNAs. Interacts (via central region) with ZMYND8 (via N-terminus); the interaction is direct and the association appears to occur between homodimeric ZMYND8 and the activated form of the P-TEFb complex. Interacts with BRD4, targets chromatin binding. Interacts with JMJD6. Interacts with MDFIC. Interacts with HSF1. Interacts with HTATSF1. Interacts with TBX21. In terms of assembly, (Microbial infection) Interacts with the transactivation region of HIV-1, HIV-2 and SIV Tat. (Microbial infection) Interacts with human herpes virus 1 (HHV-1) transcriptional regulator ICP22. In terms of processing, ADP-ribosylation on serine residues by PARP1 in response to DNA damage disrupts the phase separation activity of CCNT1, thereby preventing activation of CDK9. As to expression, ubiquitously expressed.

It is found in the nucleus. Its function is as follows. Regulatory subunit of the cyclin-dependent kinase pair (CDK9/cyclin-T1) complex, also called positive transcription elongation factor B (P-TEFb), which facilitates the transition from abortive to productive elongation by phosphorylating the CTD (C-terminal domain) of the large subunit of RNA polymerase II (RNA Pol II). Required to activate the protein kinase activity of CDK9: acts by mediating formation of liquid-liquid phase separation (LLPS) that enhances binding of P-TEFb to the CTD of RNA Pol II. Functionally, (Microbial infection) In case of HIV or SIV infections, binds to the transactivation domain of the viral nuclear transcriptional activator, Tat, thereby increasing Tat's affinity for the transactivating response RNA element (TAR RNA). Serves as an essential cofactor for Tat, by promoting RNA Pol II activation, allowing transcription of viral genes. In Homo sapiens (Human), this protein is Cyclin-T1 (CCNT1).